The primary structure comprises 105 residues: Met repressor (105 aa).

This sequence belongs to the MetJ family. As to quaternary structure, homodimer.

It is found in the cytoplasm. Functionally, this regulatory protein, when combined with SAM (S-adenosylmethionine) represses the expression of the methionine regulon and of enzymes involved in SAM synthesis. This chain is Met repressor, found in Klebsiella pneumoniae subsp. pneumoniae (strain ATCC 700721 / MGH 78578).